Reading from the N-terminus, the 454-residue chain is NADH-quinone oxidoreductase subunit H (454 aa).

9 helical membrane passes run 18–38 (WWLV…TVLF), 88–108 (VVYV…IAVI), 131–151 (LPIA…GIVL), 172–192 (MISY…YSGS), 206–226 (WYIV…VGET), 256–276 (FMLA…TLFL), 296–316 (WWPM…FIWL), 328–348 (LMKL…MLVA), and 360–380 (FADI…LSFV). The segment at 395 to 454 (AEEPAAFDPMAGGFPVPPLPGQTLPPVPRRRPRRDRELIVSGGPDTASDGPANGKEASDG) is disordered. The segment covering 409–421 (PVPPLPGQTLPPV) has biased composition (pro residues).

The protein belongs to the complex I subunit 1 family. As to quaternary structure, NDH-1 is composed of 14 different subunits. Subunits NuoA, H, J, K, L, M, N constitute the membrane sector of the complex.

The protein resides in the cell membrane. The enzyme catalyses a quinone + NADH + 5 H(+)(in) = a quinol + NAD(+) + 4 H(+)(out). Its function is as follows. NDH-1 shuttles electrons from NADH, via FMN and iron-sulfur (Fe-S) centers, to quinones in the respiratory chain. The immediate electron acceptor for the enzyme in this species is believed to be ubiquinone. Couples the redox reaction to proton translocation (for every two electrons transferred, four hydrogen ions are translocated across the cytoplasmic membrane), and thus conserves the redox energy in a proton gradient. This subunit may bind ubiquinone. The chain is NADH-quinone oxidoreductase subunit H from Streptomyces avermitilis (strain ATCC 31267 / DSM 46492 / JCM 5070 / NBRC 14893 / NCIMB 12804 / NRRL 8165 / MA-4680).